The following is a 685-amino-acid chain: UvrABC system protein B (685 aa).

The 382-residue stretch at 39-420 folds into the Helicase ATP-binding domain; sequence EGIGDGLMYQ…TYEAEHQGQV (382 aa). Position 52 to 59 (52 to 59) interacts with ATP; sequence GVTGSGKT. A Beta-hairpin motif is present at residues 105–128; it reads YYDYYQPEAYVPSRDLFIEKDSSI. The Helicase C-terminal domain maps to 443-596; it reads QVDDLLSEAK…QIAFNQANGI (154 aa). Positions 640–675 constitute a UVR domain; the sequence is AKSIRKLEKEMQEHARNLEFEKAAAARDELFRLRQR.

It belongs to the UvrB family. As to quaternary structure, forms a heterotetramer with UvrA during the search for lesions. Interacts with UvrC in an incision complex.

It localises to the cytoplasm. Functionally, the UvrABC repair system catalyzes the recognition and processing of DNA lesions. A damage recognition complex composed of 2 UvrA and 2 UvrB subunits scans DNA for abnormalities. Upon binding of the UvrA(2)B(2) complex to a putative damaged site, the DNA wraps around one UvrB monomer. DNA wrap is dependent on ATP binding by UvrB and probably causes local melting of the DNA helix, facilitating insertion of UvrB beta-hairpin between the DNA strands. Then UvrB probes one DNA strand for the presence of a lesion. If a lesion is found the UvrA subunits dissociate and the UvrB-DNA preincision complex is formed. This complex is subsequently bound by UvrC and the second UvrB is released. If no lesion is found, the DNA wraps around the other UvrB subunit that will check the other stand for damage. The chain is UvrABC system protein B from Aromatoleum aromaticum (strain DSM 19018 / LMG 30748 / EbN1) (Azoarcus sp. (strain EbN1)).